The chain runs to 353 residues: MVGDTLKLLSPLMTRYFFLLFYSTDSSDLNENQHPLDFDEMAFGKVKSGISFLIQTGVGILGNSFLLCFYNLILFTGHKLRPTDLILSQLALANSMVLFFKGIPQTMAAFGLKYLLNDTGCKFVFYYHRVGTRVSLSTICLLNGFQAIKLNPSICRWMEIKIRSPRFIDFCCLLCWAPHVLMNASVLLLVNGPLNSKNSSAKNNYGYCSYKASKRFSSLHAVLYFSPDFMSLGFMVWASGSMVFFLYRHKQQVQHNHSNRLSCRPSQEARATHTIMVLVSSFFVFYSVHSFLTIWTTVVANPGQWIVTNSVLVASCFPARSPFVLIMSDTHISQFCFACRTRKTLFPNLVVMP.

Topologically, residues 1-56 (MVGDTLKLLSPLMTRYFFLLFYSTDSSDLNENQHPLDFDEMAFGKVKSGISFLIQT) are extracellular. A helical membrane pass occupies residues 57–77 (GVGILGNSFLLCFYNLILFTG). Over 78–84 (HKLRPTD) the chain is Cytoplasmic. A helical membrane pass occupies residues 85-105 (LILSQLALANSMVLFFKGIPQ). Topologically, residues 106 to 132 (TMAAFGLKYLLNDTGCKFVFYYHRVGT) are extracellular. N-linked (GlcNAc...) asparagine glycosylation is present at Asn-117. A helical transmembrane segment spans residues 133 to 153 (RVSLSTICLLNGFQAIKLNPS). Residues 154–169 (ICRWMEIKIRSPRFID) are Cytoplasmic-facing. A helical transmembrane segment spans residues 170–190 (FCCLLCWAPHVLMNASVLLLV). Residues 191–226 (NGPLNSKNSSAKNNYGYCSYKASKRFSSLHAVLYFS) are Extracellular-facing. The N-linked (GlcNAc...) asparagine glycan is linked to Asn-198. The chain crosses the membrane as a helical span at residues 227–247 (PDFMSLGFMVWASGSMVFFLY). Topologically, residues 248 to 274 (RHKQQVQHNHSNRLSCRPSQEARATHT) are cytoplasmic. The chain crosses the membrane as a helical span at residues 275–295 (IMVLVSSFFVFYSVHSFLTIW). At 296 to 303 (TTVVANPG) the chain is on the extracellular side. The chain crosses the membrane as a helical span at residues 304–324 (QWIVTNSVLVASCFPARSPFV). The Cytoplasmic segment spans residues 325 to 353 (LIMSDTHISQFCFACRTRKTLFPNLVVMP).

It belongs to the G-protein coupled receptor 1 family. Expressed in the olfactory mucosa, very low expression in brain, lung and kidney.

It is found in the cell membrane. In terms of biological role, putative pheromone receptor. The sequence is that of Vomeronasal type-1 receptor 1 (VN1R1) from Homo sapiens (Human).